The following is a 141-amino-acid chain: Nucleoside diphosphate kinase (141 aa).

Residues Lys-11, Phe-59, Arg-87, Thr-93, Arg-104, and Asn-114 each contribute to the ATP site. His-117 (pros-phosphohistidine intermediate) is an active-site residue.

Belongs to the NDK family. Homotetramer. The cofactor is Mg(2+).

It is found in the cytoplasm. It catalyses the reaction a 2'-deoxyribonucleoside 5'-diphosphate + ATP = a 2'-deoxyribonucleoside 5'-triphosphate + ADP. The enzyme catalyses a ribonucleoside 5'-diphosphate + ATP = a ribonucleoside 5'-triphosphate + ADP. Major role in the synthesis of nucleoside triphosphates other than ATP. The ATP gamma phosphate is transferred to the NDP beta phosphate via a ping-pong mechanism, using a phosphorylated active-site intermediate. In Halorhodospira halophila (strain DSM 244 / SL1) (Ectothiorhodospira halophila (strain DSM 244 / SL1)), this protein is Nucleoside diphosphate kinase.